Here is a 112-residue protein sequence, read N- to C-terminus: DNA-binding protein TON_1102 (112 aa).

Belongs to the PDCD5 family.

The sequence is that of DNA-binding protein TON_1102 from Thermococcus onnurineus (strain NA1).